A 536-amino-acid polypeptide reads, in one-letter code: Plasmepsin V (536 aa).

An N-terminal signal peptide occupies residues 1–34 (MVGASLGPPGRGSLSRLIRLVICVLTLCALSVQG). Residues 35–492 (RSESTEGHSK…RKDNIFLKIP (458 aa)) are Lumenal-facing. The Peptidase A1 domain occupies 62–462 (YFLDIDIGTP…DIQKNRIGFV (401 aa)). The active site involves Asp-80. Disulfide bonds link Cys-90-Cys-172, Cys-93-Cys-96, Cys-117-Cys-128, Cys-122-Cys-133, Cys-220-Cys-466, Cys-337-Cys-382, and Cys-391-Cys-427. The segment covering 244-258 (SKSVSGQGSGPVSES) has biased composition (low complexity). The interval 244-264 (SKSVSGQGSGPVSESLSESGE) is disordered. The active site involves Asp-313. The chain crosses the membrane as a helical span at residues 493-513 (FFYLYSLFVVFALSVLLSLVF). At 514-536 (YVRRLYHMEYSPLPSEGKAPADA) the chain is on the cytoplasmic side.

The protein belongs to the peptidase A1 family. In terms of assembly, component of a complex composed of SPC25 and PMV; the interaction is mediated via the transmembrane domains. The complex interacts with the SEC61 channel-forming translocon complex and is involved in the recognition and import of PEXEL motif-containing proteins into the ER for subsequent export. Post-translationally, it is not clear if the zymogen has a cleavable propeptide. Cleavage of the putative propeptide is dispensable for catalytic activity.

The protein resides in the endoplasmic reticulum membrane. Inhibited by peptidomimetic inhibitors such as WEHI-842. Functionally, during the asexual blood stage, plays an essential role in the export of several proteins into the host erythrocytes by cleaving the pentameric localization motif RxLxE/Q/D (termed Plasmodium export element (PEXEL)) located downstream of the N-terminal secretory signal sequence. Specifically, cleaves after the leucine residue in the RxLxE/Q/D (or RxLxxE) motif of exported proteins including EMP1. Also, by regulating protein export, plays an essential role in gametocyte development and thus parasite transmission to the mosquito vector. This Plasmodium vivax (strain Salvador I) protein is Plasmepsin V.